The following is a 71-amino-acid chain: Exodeoxyribonuclease 7 small subunit (71 aa).

It belongs to the XseB family. Heterooligomer composed of large and small subunits.

The protein resides in the cytoplasm. The enzyme catalyses Exonucleolytic cleavage in either 5'- to 3'- or 3'- to 5'-direction to yield nucleoside 5'-phosphates.. Functionally, bidirectionally degrades single-stranded DNA into large acid-insoluble oligonucleotides, which are then degraded further into small acid-soluble oligonucleotides. The sequence is that of Exodeoxyribonuclease 7 small subunit from Streptococcus equi subsp. zooepidemicus (strain H70).